A 551-amino-acid chain; its full sequence is Inosine-5'-monophosphate dehydrogenase (551 aa).

2 consecutive CBS domains span residues 102–163 (FILD…PLSE) and 165–221 (MTSD…PLAS). NAD(+)-binding positions include 258-260 (DSS) and 308-310 (GMG). Positions 310 and 312 each coordinate K(+). Ser-313 is a binding site for IMP. Residue Cys-315 coordinates K(+). The active-site Thioimidate intermediate is the Cys-315. IMP is bound by residues 349-351 (DGG), 372-373 (GS), and 396-400 (YRGMG). The tract at residues 407–462 (AGTRRTASPPARGLRSPEASPSTAASSGGASRASALSEASPSAKSEASRTSTSTGS) is disordered. Low complexity predominate over residues 422–462 (SPEASPSTAASSGGASRASALSEASPSAKSEASRTSTSTGS). Residue Arg-465 is the Proton acceptor of the active site. Gln-477 is an IMP binding site. Positions 536 and 537 each coordinate K(+).

This sequence belongs to the IMPDH/GMPR family. Homotetramer. It depends on K(+) as a cofactor.

Its subcellular location is the cytoplasm. The catalysed reaction is IMP + NAD(+) + H2O = XMP + NADH + H(+). The protein operates within purine metabolism; XMP biosynthesis via de novo pathway; XMP from IMP: step 1/1. With respect to regulation, mycophenolic acid (MPA) is a non-competitive inhibitor that prevents formation of the closed enzyme conformation by binding to the same site as the amobile flap. In contrast, mizoribine monophosphate (MZP) is a competitive inhibitor that induces the closed conformation. MPA is a potent inhibitor of mammalian IMPDHs but a poor inhibitor of the bacterial enzymes. MZP is a more potent inhibitor of bacterial IMPDH. Potently inhibited by MPA and adenine dinucleotide analogs such as thiazole-4-carboxamide adenine dinucleotide (TAD). Functionally, catalyzes the conversion of inosine 5'-phosphate (IMP) to xanthosine 5'-phosphate (XMP), the first committed and rate-limiting step in the de novo synthesis of guanine nucleotides, and therefore plays an important role in the regulation of cell growth. In Toxoplasma gondii, this protein is Inosine-5'-monophosphate dehydrogenase.